Here is a 342-residue protein sequence, read N- to C-terminus: S-adenosylmethionine:tRNA ribosyltransferase-isomerase (342 aa).

This sequence belongs to the QueA family. Monomer.

The protein resides in the cytoplasm. It carries out the reaction 7-aminomethyl-7-carbaguanosine(34) in tRNA + S-adenosyl-L-methionine = epoxyqueuosine(34) in tRNA + adenine + L-methionine + 2 H(+). Its pathway is tRNA modification; tRNA-queuosine biosynthesis. Transfers and isomerizes the ribose moiety from AdoMet to the 7-aminomethyl group of 7-deazaguanine (preQ1-tRNA) to give epoxyqueuosine (oQ-tRNA). The protein is S-adenosylmethionine:tRNA ribosyltransferase-isomerase of Streptococcus mutans serotype c (strain ATCC 700610 / UA159).